A 335-amino-acid polypeptide reads, in one-letter code: Aspartate carbamoyltransferase catalytic subunit (335 aa).

Carbamoyl phosphate-binding residues include Arg81 and Thr82. Residue Lys109 coordinates L-aspartate. Carbamoyl phosphate-binding residues include Arg131, His159, and Gln162. L-aspartate-binding residues include Arg192 and Arg246. The carbamoyl phosphate site is built by Gly287 and Pro288.

Belongs to the aspartate/ornithine carbamoyltransferase superfamily. ATCase family. As to quaternary structure, heterododecamer (2C3:3R2) of six catalytic PyrB chains organized as two trimers (C3), and six regulatory PyrI chains organized as three dimers (R2).

It carries out the reaction carbamoyl phosphate + L-aspartate = N-carbamoyl-L-aspartate + phosphate + H(+). It participates in pyrimidine metabolism; UMP biosynthesis via de novo pathway; (S)-dihydroorotate from bicarbonate: step 2/3. In terms of biological role, catalyzes the condensation of carbamoyl phosphate and aspartate to form carbamoyl aspartate and inorganic phosphate, the committed step in the de novo pyrimidine nucleotide biosynthesis pathway. The chain is Aspartate carbamoyltransferase catalytic subunit from Caulobacter sp. (strain K31).